Consider the following 210-residue polypeptide: DNA dC-&gt;dU-editing enzyme APOBEC-3H (210 aa).

Positions leucine 4–leucine 126 constitute a CMP/dCMP-type deaminase domain. Zn(2+) is bound at residue histidine 54. Catalysis depends on glutamate 56, which acts as the Proton donor. 2 residues coordinate Zn(2+): cysteine 85 and cysteine 88. The interval serine 182–arginine 210 is necessary and sufficient for localization to the cytoplasm.

The protein belongs to the cytidine and deoxycytidylate deaminase family. Homodimer. Requires Zn(2+) as cofactor.

The protein resides in the cytoplasm. It carries out the reaction a 2'-deoxycytidine in single-stranded DNA + H2O + H(+) = a 2'-deoxyuridine in single-stranded DNA + NH4(+). With respect to regulation, antiviral activity is neutralized by the simian immunodeficiency virus rhesus (SIV-mac) virion infectivity factor (VIF). In terms of biological role, DNA deaminase (cytidine deaminase) which acts as an inhibitor of retrovirus replication and retrotransposon mobility via deaminase-dependent and -independent mechanisms. Exhibits antiviral activity against vif-deficient HIV-1. After the penetration of retroviral nucleocapsids into target cells of infection and the initiation of reverse transcription, it can induce the conversion of cytosine to uracil in the minus-sense single-strand viral DNA, leading to G-to-A hypermutations in the subsequent plus-strand viral DNA. The resultant detrimental levels of mutations in the proviral genome, along with a deamination-independent mechanism that works prior to the proviral integration, together exert efficient antiretroviral effects in infected target cells. Selectively targets single-stranded DNA and does not deaminate double-stranded DNA or single- or double-stranded RNA. The sequence is that of DNA dC-&gt;dU-editing enzyme APOBEC-3H from Macaca mulatta (Rhesus macaque).